Reading from the N-terminus, the 201-residue chain is Ras-related protein Rab-5A (201 aa).

GTP-binding positions include 16–24 (GEAAVGKSS), 35–41 (LDYQEST), 64–68 (DTAGQ), 122–125 (NKLD), and 152–154 (SAK). The Effector region signature appears at 38-46 (QESTIGAAF). 2 S-geranylgeranyl cysteine lipidation sites follow: Cys-199 and Cys-200.

This sequence belongs to the small GTPase superfamily. Rab family.

It localises to the cell membrane. Its subcellular location is the endosome membrane. Regulated by guanine nucleotide exchange factors (GEFs) which promote the exchange of bound GDP for free GTP. Required for the fusion of plasma membranes and early endosomes. In Dictyostelium discoideum (Social amoeba), this protein is Ras-related protein Rab-5A (rab5A).